The chain runs to 145 residues: Conglutin (145 aa).

Positions 1–21 (MAKSTILVALLALVLVAHASA) are cleaved as a signal peptide. Cystine bridges form between cysteine 35-cysteine 92, cysteine 47-cysteine 79, cysteine 80-cysteine 128, cysteine 94-cysteine 136, and cysteine 105-cysteine 145.

Belongs to the 2S seed storage albumins family. Expressed in seeds. Not expressed in roots, pegs (budding ovaries) or leaves.

The polypeptide is Conglutin (Arachis hypogaea (Peanut)).